Consider the following 227-residue polypeptide: Probable chorismate pyruvate-lyase (227 aa).

Substrate is bound by residues Arg-75, Leu-113, and Glu-173. Residues 192–227 (SGDWSAHPRVREHGRPLEHTASRAHPATRASDEQRR) form a disordered region. A compositionally biased stretch (basic and acidic residues) spans 200–212 (RVREHGRPLEHTA).

This sequence belongs to the UbiC family.

The protein resides in the cytoplasm. The catalysed reaction is chorismate = 4-hydroxybenzoate + pyruvate. It participates in cofactor biosynthesis; ubiquinone biosynthesis. In terms of biological role, removes the pyruvyl group from chorismate, with concomitant aromatization of the ring, to provide 4-hydroxybenzoate (4HB) for the ubiquinone pathway. This is Probable chorismate pyruvate-lyase from Paraburkholderia xenovorans (strain LB400).